Here is a 329-residue protein sequence, read N- to C-terminus: MSNSSCADEDLIIRFDSLNQKAAQFVYLLAIILTFITTYFAVKILFTQSFFEISTKILLVQNLFYANLYQFFHGIEAVRMLYKSFFMINDPCNFMEPEIECVFYYKIILMGSSGMVYGQTGLLIERLCATFSKDYKKKQSAIKCAVISILVLICSSSTGRLIVWDDPIDKYNFACYIPPKESYIRANHYFTMCAVLSTINFCISTFILKYNKRCEYQTRFKVGARFQKQELIESTKAICFLTVSQFVAVFLNSFGMIVLVYIQESISHRIFNLLVVWLYAFPIVVLMFPVILVHQIRSSRWRRALKIKVIKNEKQTQDDHMKHMKNMWI.

Transmembrane regions (helical) follow at residues 25–45, 57–77, 104–124, 144–164, 188–208, 240–260, and 273–293; these read FVYL…VKIL, ILLV…GIEA, YYKI…GLLI, CAVI…LIVW, HYFT…TFIL, FLTV…IVLV, and LLVV…VILV.

It belongs to the nematode receptor-like protein sra family.

Its subcellular location is the membrane. The sequence is that of Serpentine receptor class alpha-2 (sra-2) from Caenorhabditis elegans.